The chain runs to 304 residues: tRNA dimethylallyltransferase (304 aa).

13–20 contacts ATP; it reads GPTAAGKT. Position 15–20 (15–20) interacts with substrate; the sequence is TAAGKT. Positions 38–41 are interaction with substrate tRNA; that stretch reads DSRQ.

Belongs to the IPP transferase family. In terms of assembly, monomer. It depends on Mg(2+) as a cofactor.

It catalyses the reaction adenosine(37) in tRNA + dimethylallyl diphosphate = N(6)-dimethylallyladenosine(37) in tRNA + diphosphate. Its function is as follows. Catalyzes the transfer of a dimethylallyl group onto the adenine at position 37 in tRNAs that read codons beginning with uridine, leading to the formation of N6-(dimethylallyl)adenosine (i(6)A). The sequence is that of tRNA dimethylallyltransferase from Cytophaga hutchinsonii (strain ATCC 33406 / DSM 1761 / CIP 103989 / NBRC 15051 / NCIMB 9469 / D465).